Consider the following 739-residue polypeptide: MQNLFLSLLAAAVTVHAYGSGGSNWDQAYSRAKDALQKLSQTEKVGLVTGVKWMGGPCVGNTYKPESIDYPSLCLQDSPLGIRFANPVTAFPAGINAGATWDTQLLYARGAAMGAEAKGLGVHVQLGPVAGPLGKNPNGGRNWEGFSVDPYLSGVAMEKTIRGMQDSGVQACAKHWLGNEQEHYRDTISSNIGDRAAHELYVWPFMDAVKADVASVMCSYNKVNGTWACESDAINNKLMKEELGFPGYIMSDWNAQHSTVNSAVSGLDMTMPGSDFSNPPGSIFWGSNLEAAVADGSVPQSRLDDMVTRILAAWYLVGQDKGYPPVAFSSWNGGKANVDVTADHGTVARAVARDSIVLLKNDQRTLPLRKPKSLAIVGLDAIVNPAGPNACSDRGCNNGTLAMGWGSGTAEFPYLVGPLDAIQKRAAADGTKIVPSTTDDPTAGASAAAAAETAIVFINSDSGEGYITVEGNLGDRNNLDPWHNGNELVKAVAAASKNVIVVVHSVGPIILETILAQPSVKAIVWAGLPGQESGNALVDVIYGDTAPSGKLPYTIAKQAADYGASWINAETDDFTEGLYIDYRHFDAKGIAPRYEFGYGLSYTTFKYSGLWVNVYTSAGAANGKVVPGGPADLFEVVGQVSVFVRNNGRVAGAEVAQLYIGLPDSAPATPPKQLRGFQKMMLQPGQMGRATFELTRRDLSYWDVQQQKWVVPSGTFKVYVGSSSRDIREEGSFRVRRGW.

The N-terminal stretch at 1 to 17 (MQNLFLSLLAAAVTVHA) is a signal peptide. N224 carries an N-linked (GlcNAc...) asparagine glycan. Residue D252 is part of the active site. Residue N398 is glycosylated (N-linked (GlcNAc...) asparagine).

This sequence belongs to the glycosyl hydrolase 3 family.

It is found in the secreted. The enzyme catalyses Hydrolysis of terminal, non-reducing beta-D-glucosyl residues with release of beta-D-glucose.. The protein operates within glycan metabolism; cellulose degradation. Beta-glucosidases are one of a number of cellulolytic enzymes involved in the degradation of cellulosic biomass. Catalyzes the last step releasing glucose from the inhibitory cellobiose. The polypeptide is Probable beta-glucosidase L (bglL) (Neosartorya fischeri (strain ATCC 1020 / DSM 3700 / CBS 544.65 / FGSC A1164 / JCM 1740 / NRRL 181 / WB 181) (Aspergillus fischerianus)).